The chain runs to 166 residues: UPF0336 protein MT0525.1 (166 aa).

The MaoC-like domain occupies 8 to 131 (QTLIGKHYRA…VLAEIRSEVT (124 aa)).

This sequence belongs to the UPF0336 family.

The polypeptide is UPF0336 protein MT0525.1 (Mycobacterium tuberculosis (strain CDC 1551 / Oshkosh)).